The sequence spans 382 residues: Lipid-A-disaccharide synthase (382 aa).

This sequence belongs to the LpxB family.

The enzyme catalyses 2-N,3-O-bis[(3R)-3-hydroxytetradecanoyl]-alpha-D-glucosaminyl 1-phosphate + UDP-2-N,3-O-bis[(3R)-3-hydroxytetradecanoyl]-alpha-D-glucosamine = lipid A disaccharide (E. coli) + UDP + H(+). It catalyses the reaction a lipid X + a UDP-2-N,3-O-bis[(3R)-3-hydroxyacyl]-alpha-D-glucosamine = a lipid A disaccharide + UDP + H(+). It functions in the pathway glycolipid biosynthesis; lipid IV(A) biosynthesis; lipid IV(A) from (3R)-3-hydroxytetradecanoyl-[acyl-carrier-protein] and UDP-N-acetyl-alpha-D-glucosamine: step 5/6. Functionally, condensation of UDP-2,3-diacylglucosamine and 2,3-diacylglucosamine-1-phosphate to form lipid A disaccharide, a precursor of lipid A, a phosphorylated glycolipid that anchors the lipopolysaccharide to the outer membrane of the cell. The protein is Lipid-A-disaccharide synthase of Escherichia coli (strain K12 / MC4100 / BW2952).